The sequence spans 158 residues: Crossover junction endodeoxyribonuclease RuvC (158 aa).

Residues aspartate 7, glutamate 66, and aspartate 139 contribute to the active site. Mg(2+)-binding residues include aspartate 7, glutamate 66, and aspartate 139.

This sequence belongs to the RuvC family. In terms of assembly, homodimer which binds Holliday junction (HJ) DNA. The HJ becomes 2-fold symmetrical on binding to RuvC with unstacked arms; it has a different conformation from HJ DNA in complex with RuvA. In the full resolvosome a probable DNA-RuvA(4)-RuvB(12)-RuvC(2) complex forms which resolves the HJ. Requires Mg(2+) as cofactor.

It localises to the cytoplasm. It catalyses the reaction Endonucleolytic cleavage at a junction such as a reciprocal single-stranded crossover between two homologous DNA duplexes (Holliday junction).. Its function is as follows. The RuvA-RuvB-RuvC complex processes Holliday junction (HJ) DNA during genetic recombination and DNA repair. Endonuclease that resolves HJ intermediates. Cleaves cruciform DNA by making single-stranded nicks across the HJ at symmetrical positions within the homologous arms, yielding a 5'-phosphate and a 3'-hydroxyl group; requires a central core of homology in the junction. The consensus cleavage sequence is 5'-(A/T)TT(C/G)-3'. Cleavage occurs on the 3'-side of the TT dinucleotide at the point of strand exchange. HJ branch migration catalyzed by RuvA-RuvB allows RuvC to scan DNA until it finds its consensus sequence, where it cleaves and resolves the cruciform DNA. This Campylobacter hominis (strain ATCC BAA-381 / DSM 21671 / CCUG 45161 / LMG 19568 / NCTC 13146 / CH001A) protein is Crossover junction endodeoxyribonuclease RuvC.